The following is a 219-amino-acid chain: Antigen 5 like allergen Cul n 1 (219 aa).

The N-terminal stretch at 1-19 (MIKKLSIVILFSCISFVLS) is a signal peptide. 3 disulfide bridges follow: Cys-23–Cys-45, Cys-28–Cys-124, and Cys-55–Cys-117. Residues 73–211 (LKVHNRLRNK…RHSGNKYFFW (139 aa)) form the SCP domain.

The protein belongs to the CRISP family. In terms of tissue distribution, expressed in salivary glands.

It localises to the secreted. The polypeptide is Antigen 5 like allergen Cul n 1 (Culicoides nubeculosus (Biting midge)).